The chain runs to 285 residues: Eukaryotic translation initiation factor 3 subunit F-2 (285 aa).

One can recognise an MPN domain in the interval 11–145; that stretch reads VFIKPLVLFQ…TRLYCAVEIG (135 aa).

This sequence belongs to the eIF-3 subunit F family. As to quaternary structure, component of the eukaryotic translation initiation factor 3 (eIF-3) complex. The eIF-3 complex interacts with pix.

It is found in the cytoplasm. Component of the eukaryotic translation initiation factor 3 (eIF-3) complex, which is involved in protein synthesis of a specialized repertoire of mRNAs and, together with other initiation factors, stimulates binding of mRNA and methionyl-tRNAi to the 40S ribosome. The eIF-3 complex specifically targets and initiates translation of a subset of mRNAs involved in cell proliferation. This is Eukaryotic translation initiation factor 3 subunit F-2 from Drosophila yakuba (Fruit fly).